Here is a 344-residue protein sequence, read N- to C-terminus: Neurotrimin (344 aa).

Positions methionine 1–serine 33 are cleaved as a signal peptide. 3 Ig-like C2-type domains span residues proline 39–serine 126, proline 136–threonine 218, and proline 222–methionine 309. Residues asparagine 44, asparagine 70, and asparagine 152 are each glycosylated (N-linked (GlcNAc...) asparagine). The cysteines at positions 57 and 115 are disulfide-linked. Cystine bridges form between cysteine 157/cysteine 201 and cysteine 243/cysteine 295. 3 N-linked (GlcNAc...) asparagine glycosylation sites follow: asparagine 284, asparagine 292, and asparagine 305. Asparagine 321 is lipidated: GPI-anchor amidated asparagine; alternate. A glycan (N-linked (GlcNAc...) asparagine; alternate) is linked at asparagine 321. The propeptide at glycine 322–phenylalanine 344 is removed in mature form.

The protein belongs to the immunoglobulin superfamily. IgLON family.

The protein localises to the cell membrane. Functionally, neural cell adhesion molecule. This chain is Neurotrimin (Ntm), found in Mus musculus (Mouse).